Reading from the N-terminus, the 483-residue chain is Betaine aldehyde dehydrogenase (483 aa).

Residues Ile-27 and Asp-93 each contribute to the K(+) site. 149–151 (GAW) is a binding site for NAD(+). The active-site Charge relay system is the Lys-161. 175-178 (KPSE) contacts NAD(+). Val-179 contributes to the K(+) binding site. 228-231 (SVPT) contacts NAD(+). Position 243 (Val-243) interacts with K(+). Glu-249 acts as the Proton acceptor in catalysis. Positions 251, 283, and 380 each coordinate NAD(+). Cys-283 functions as the Nucleophile in the catalytic mechanism. Cys-283 bears the Cysteine sulfenic acid (-SOH) mark. Residues Lys-450 and Gly-453 each coordinate K(+). Glu-457 serves as the catalytic Charge relay system.

It belongs to the aldehyde dehydrogenase family. As to quaternary structure, dimer of dimers. It depends on K(+) as a cofactor.

It catalyses the reaction betaine aldehyde + NAD(+) + H2O = glycine betaine + NADH + 2 H(+). Its pathway is amine and polyamine biosynthesis; betaine biosynthesis via choline pathway; betaine from betaine aldehyde: step 1/1. Involved in the biosynthesis of the osmoprotectant glycine betaine. Catalyzes the irreversible oxidation of betaine aldehyde to the corresponding acid. The sequence is that of Betaine aldehyde dehydrogenase from Cereibacter sphaeroides (strain ATCC 17025 / ATH 2.4.3) (Rhodobacter sphaeroides).